A 477-amino-acid chain; its full sequence is Cysteine--tRNA ligase (477 aa).

C30 lines the Zn(2+) pocket. A 'HIGH' region motif is present at residues 32 to 42; it reads PTVYDYNHIGH. Residues C209, H234, and E238 each contribute to the Zn(2+) site. The short motif at 267–271 is the 'KMSKS' region element; that stretch reads KMSKS. Position 270 (K270) interacts with ATP.

The protein belongs to the class-I aminoacyl-tRNA synthetase family. Zn(2+) serves as cofactor.

The protein localises to the cytoplasm. The enzyme catalyses tRNA(Cys) + L-cysteine + ATP = L-cysteinyl-tRNA(Cys) + AMP + diphosphate. The protein is Cysteine--tRNA ligase of Staphylothermus marinus (strain ATCC 43588 / DSM 3639 / JCM 9404 / F1).